The chain runs to 450 residues: tRNA-2-methylthio-N(6)-dimethylallyladenosine synthase (450 aa).

The MTTase N-terminal domain occupies 3-119 (RRYYITTFGC…LGELLEQVWN (117 aa)). 6 residues coordinate [4Fe-4S] cluster: cysteine 12, cysteine 48, cysteine 82, cysteine 154, cysteine 158, and cysteine 161. Residues 140-377 (RDSTVTAWVN…NHLVAKIAGD (238 aa)) enclose the Radical SAM core domain. In terms of domain architecture, TRAM spans 380-444 (QRYLGREEVV…AFSLSGVPLA (65 aa)).

This sequence belongs to the methylthiotransferase family. MiaB subfamily. Monomer. It depends on [4Fe-4S] cluster as a cofactor.

The protein resides in the cytoplasm. It carries out the reaction N(6)-dimethylallyladenosine(37) in tRNA + (sulfur carrier)-SH + AH2 + 2 S-adenosyl-L-methionine = 2-methylsulfanyl-N(6)-dimethylallyladenosine(37) in tRNA + (sulfur carrier)-H + 5'-deoxyadenosine + L-methionine + A + S-adenosyl-L-homocysteine + 2 H(+). Catalyzes the methylthiolation of N6-(dimethylallyl)adenosine (i(6)A), leading to the formation of 2-methylthio-N6-(dimethylallyl)adenosine (ms(2)i(6)A) at position 37 in tRNAs that read codons beginning with uridine. The polypeptide is tRNA-2-methylthio-N(6)-dimethylallyladenosine synthase (Thermosynechococcus vestitus (strain NIES-2133 / IAM M-273 / BP-1)).